The chain runs to 155 residues: Ribonuclease H (155 aa).

The 142-residue stretch at 1 to 142 (MLKQVEIFTD…CDELARAAAM (142 aa)) folds into the RNase H type-1 domain. 4 residues coordinate Mg(2+): Asp-10, Glu-48, Asp-70, and Asp-134.

Belongs to the RNase H family. In terms of assembly, monomer. Requires Mg(2+) as cofactor.

Its subcellular location is the cytoplasm. It carries out the reaction Endonucleolytic cleavage to 5'-phosphomonoester.. In terms of biological role, endonuclease that specifically degrades the RNA of RNA-DNA hybrids. The sequence is that of Ribonuclease H from Citrobacter koseri (strain ATCC BAA-895 / CDC 4225-83 / SGSC4696).